Consider the following 414-residue polypeptide: Ornithine aminotransferase (414 aa).

Cysteines 154 and 163 form a disulfide. Lys-262 is modified (N6-(pyridoxal phosphate)lysine).

This sequence belongs to the class-III pyridoxal-phosphate-dependent aminotransferase family. In terms of assembly, homodimer. Pyridoxal 5'-phosphate serves as cofactor. The disulfide bond between Cys-154 and Cys-163 is reduced by TRX1 which increases OAT catalytic activity.

It is found in the cytoplasm. The enzyme catalyses a 2-oxocarboxylate + L-ornithine = L-glutamate 5-semialdehyde + an L-alpha-amino acid. It carries out the reaction L-ornithine + 2-oxoglutarate = L-glutamate 5-semialdehyde + L-glutamate. Its pathway is amino-acid biosynthesis; L-proline biosynthesis; L-glutamate 5-semialdehyde from L-ornithine: step 1/1. Unlike for mammalian OATs, activity is increased by TRX1-mediated reduction of the disulfide bond between Cys-154 and Cys-163. Binding to TRX1 may also induce conformational changes that facilitate substrate binding. Catalyzes the transamination of alpha-ketoglutarate with ornithine or N-acetylornithine and of glutamate-5-semialdehyde with glutamate and alanine. The polypeptide is Ornithine aminotransferase (Plasmodium yoelii yoelii).